Reading from the N-terminus, the 233-residue chain is DnaA regulatory inactivator Hda (233 aa).

Belongs to the DnaA family. HdA subfamily. As to quaternary structure, the active form seems to be an ADP-bound monomer. Forms the RIDA complex (regulatory inactivation of DnaA) of ATP-DnaA, ADP-Hda and the DNA-loaded beta sliding clamp (dnaN).

In terms of biological role, mediates the interaction of DNA replication initiator protein DnaA with DNA polymerase subunit beta sliding clamp (dnaN). Stimulates hydrolysis of ATP-DnaA to ADP-DnaA, rendering DnaA inactive for reinitiation, a process called regulatory inhibition of DnaA or RIDA. This is DnaA regulatory inactivator Hda from Escherichia fergusonii (strain ATCC 35469 / DSM 13698 / CCUG 18766 / IAM 14443 / JCM 21226 / LMG 7866 / NBRC 102419 / NCTC 12128 / CDC 0568-73).